The sequence spans 68 residues: Protein P34 (68 aa).

Helical transmembrane passes span 4-24 (FVGP…LAVL) and 41-61 (GFSS…GFAM).

It localises to the virion membrane. This chain is Protein P34 (XXXIV), found in Acinetobacter calcoaceticus (Arthrobacter siderocapsulatus).